The sequence spans 975 residues: Homeobox protein cut-like 1 (975 aa).

The CUT 1 DNA-binding region spans 1 to 73 (SRQVKEQLIK…ILALRSIQGR (73 aa)). 2 disordered regions span residues 90 to 113 (PKRR…GSDE) and 126 to 148 (LQVQ…TSDD). A coiled-coil region spans residues 113-169 (EAIKSILEQAKRELQVQKTAEPAQPSSTSSSGTSDDAIRSILQQARREMEAQQAALD). At Ser207 the chain carries Phosphoserine. Positions 209 to 246 (KKPPTAPDTSASTLPNPPALKKESQDAPGLDLPGAAES) are disordered. Glycyl lysine isopeptide (Lys-Gly) (interchain with G-Cter in SUMO2) cross-links involve residues Lys229, Lys255, and Lys286. Residues 262–297 (GVWKDHWWSTVQPERKSAAPPEDAKSEEAGGTKEKG) show a composition bias toward basic and acidic residues. The tract at residues 262 to 369 (GVWKDHWWST…SKPAKPSVPP (108 aa)) is disordered. Over residues 328-351 (RTPQSSELSLTGASRSETPQNSPL) the composition is skewed to polar residues. Position 349 is a phosphoserine (Ser349). The CUT 2 DNA-binding region spans 374 to 461 (QYEIYMYQEV…QGVLPVQGQQ (88 aa)). Positions 476-489 (LQQGCVSSESTPKT) are enriched in polar residues. Positions 476–549 (LQQGCVSSES…SQPATPLPLS (74 aa)) are disordered. Residues 490-506 (SASCSPAPESPMSSSES) show a composition bias toward low complexity. Phosphoserine is present on residues Ser499 and Ser509. A DNA-binding region (CUT 3) is located at residues 557 to 644 (QELVAMSPEL…VEKLMDMKRM (88 aa)). The segment at 652–687 (RRHSSVSDSQPCEPPSVGIDYSQGASPQPQHQLKKP) is disordered. A DNA-binding region (homeobox) is located at residues 684–743 (LKKPRVVLAPEEKEALKRAYQQKPYPSPKTIEELATQLNLKTSTVINWFHNYRSRIRREL). Ser710 carries the phosphoserine modification. Lys724 is covalently cross-linked (Glycyl lysine isopeptide (Lys-Gly) (interchain with G-Cter in SUMO2)). The segment at 752-949 (SQGQAGARHS…DSRDNPLRKK (198 aa)) is disordered. Residues 756 to 773 (AGARHSPSARSSGAAPSS) are compositionally biased toward low complexity. The residue at position 777 (Ser777) is a Phosphoserine. Residues 780–813 (GVEAAEGPGAADAEESAPAAAAKSQGGPAEAAVA) show a composition bias toward low complexity. The segment covering 838–847 (PGRRGGGGPA) has biased composition (gly residues). The segment covering 850 to 860 (APAAPAAAARG) has biased composition (low complexity). Basic residues predominate over residues 861–890 (PSRRPGARAKPRRRRRRRRRHARGGGRRYL). The span at 907–929 (RSSALPSTSAPAAARRPSSLQSL) shows a compositional bias: low complexity. Residue Ser925 is modified to Phosphoserine. Residues 937–946 (GARDSRDNPL) are compositionally biased toward basic and acidic residues. Phosphoserine is present on residues Ser956 and Ser966.

Belongs to the CUT homeobox family. In terms of assembly, interacts with BANP. Post-translationally, as cells progress into S phase, a fraction of CUX1 molecules is proteolytically processed into N-terminally truncated proteins of 110 kDa by CTSL. Cell cycle-dependent processing of CUX1 serves to generate a CDP/Cux p110 with distinct DNA binding and transcriptional properties. In terms of processing, phosphorylated by PKA. In terms of tissue distribution, a broad pattern of expression observed in tissues of diverse origins, such as cartilage, liver, brain, lung, heart and skeletal muscle. There are 2 distinct protein species: the larger one (230-250 kDa) is found mainly in adult brain, lung and heart, and the smaller one (180-190 kDa) predominates in early embryonic tissues.

The protein localises to the nucleus. In terms of biological role, transcription factor involved in the control of neuronal differentiation in the brain. Regulates dendrite development and branching, and dendritic spine formation in cortical layers II-III. Also involved in the control of synaptogenesis. In addition, it has probably a broad role in mammalian development as a repressor of developmentally regulated gene expression. May act by preventing binding of positively-activing CCAAT factors to promoters. Component of nf-munr repressor; binds to the matrix attachment regions (MARs) (5' and 3') of the immunoglobulin heavy chain enhancer. Represses T-cell receptor (TCR) beta enhancer function by binding to MARbeta, an ATC-rich DNA sequence located upstream of the TCR beta enhancer. Binds to the TH enhancer; may require the basic helix-loop-helix protein TCF4 as a coactivator. Plays a role in cell cycle progression, in particular at the G1/S transition. As cells progress into S phase, a fraction of CUX1 molecules is proteolytically processed into N-terminally truncated proteins of 110 kDa. While CUX1 only transiently binds to DNA and carries the CCAAT-displacement activity, CDP/Cux p110 makes a stable interaction with DNA and stimulates expression of genes such as POLA1. The sequence is that of Homeobox protein cut-like 1 (CUX1) from Canis lupus familiaris (Dog).